Here is a 353-residue protein sequence, read N- to C-terminus: Phosphate acyltransferase (353 aa).

The protein belongs to the PlsX family. In terms of assembly, homodimer. Probably interacts with PlsY.

It is found in the cytoplasm. It catalyses the reaction a fatty acyl-[ACP] + phosphate = an acyl phosphate + holo-[ACP]. It functions in the pathway lipid metabolism; phospholipid metabolism. In terms of biological role, catalyzes the reversible formation of acyl-phosphate (acyl-PO(4)) from acyl-[acyl-carrier-protein] (acyl-ACP). This enzyme utilizes acyl-ACP as fatty acyl donor, but not acyl-CoA. This is Phosphate acyltransferase from Rhodopseudomonas palustris (strain BisB5).